We begin with the raw amino-acid sequence, 750 residues long: Polyribonucleotide nucleotidyltransferase (750 aa).

Mg(2+)-binding residues include Asp-523 and Asp-529. The KH domain maps to 589–648; the sequence is PRVTSISIPVDKIGEVIGPKGKMINSITEETGAEITIEDDGTIYVGAADGPSAEAAIDKI. Positions 660–729 constitute an S1 motif domain; it reads GERFLGTVVK…SRGKISLVVV (70 aa).

It belongs to the polyribonucleotide nucleotidyltransferase family. Mg(2+) serves as cofactor.

Its subcellular location is the cytoplasm. The catalysed reaction is RNA(n+1) + phosphate = RNA(n) + a ribonucleoside 5'-diphosphate. Involved in mRNA degradation. Catalyzes the phosphorolysis of single-stranded polyribonucleotides processively in the 3'- to 5'-direction. This Saccharopolyspora erythraea (strain ATCC 11635 / DSM 40517 / JCM 4748 / NBRC 13426 / NCIMB 8594 / NRRL 2338) protein is Polyribonucleotide nucleotidyltransferase.